We begin with the raw amino-acid sequence, 160 residues long: Cytochrome b6-f complex subunit 4 (160 aa).

3 helical membrane-spanning segments follow: residues 36–56 (LLYVFPIVIMGSFACIVALAV), 95–115 (LLGVLAMASVPLGLILVPFIE), and 131–151 (TVFLFGTLVTLWLGIGAALPL).

It belongs to the cytochrome b family. PetD subfamily. As to quaternary structure, the 4 large subunits of the cytochrome b6-f complex are cytochrome b6, subunit IV (17 kDa polypeptide, PetD), cytochrome f and the Rieske protein, while the 4 small subunits are PetG, PetL, PetM and PetN. The complex functions as a dimer.

Its subcellular location is the cellular thylakoid membrane. In terms of biological role, component of the cytochrome b6-f complex, which mediates electron transfer between photosystem II (PSII) and photosystem I (PSI), cyclic electron flow around PSI, and state transitions. The sequence is that of Cytochrome b6-f complex subunit 4 from Trichormus variabilis (strain ATCC 29413 / PCC 7937) (Anabaena variabilis).